A 366-amino-acid chain; its full sequence is Mitogen-activated protein kinase sakA (366 aa).

Residues 20 to 299 (YTDLQPVGMG…AGEALAHEYL (280 aa)) enclose the Protein kinase domain. ATP contacts are provided by residues 26–34 (VGMGAFGLV) and Lys-49. The active-site Proton acceptor is the Asp-141. Position 171 is a phosphothreonine (Thr-171). The short motif at 171–173 (TGY) is the TXY element. At Tyr-173 the chain carries Phosphotyrosine.

Belongs to the protein kinase superfamily. Ser/Thr protein kinase family. MAP kinase subfamily. HOG1 sub-subfamily. In terms of assembly, interacts with the AGC kinase ypkA. Interacts with sakA upon osmotic and cell wall stresses. Mg(2+) serves as cofactor. In terms of processing, dually phosphorylated on Thr-171 and Tyr-173, which activates the enzyme. Environmental stresses such as high temperature, osmotic stress, cold stress or ethanol stress modulate the activation of sakA via phosphorylation.

It is found in the cytoplasm. It localises to the nucleus. The enzyme catalyses L-seryl-[protein] + ATP = O-phospho-L-seryl-[protein] + ADP + H(+). It catalyses the reaction L-threonyl-[protein] + ATP = O-phospho-L-threonyl-[protein] + ADP + H(+). Activated by tyrosine and threonine phosphorylation. Deactivated by protein phosphatase 2C homolog 2 ptcB. Functionally, proline-directed serine/threonine-protein kinase involved in a signal transduction pathway that is activated by changes in the osmolarity of the extracellular environment. Controls osmotic regulation of transcription of target genes. Involved in environmental stress response. With mpkC, plays a redundant or cooperative role in the conidial stress resistance. Also plays a supportive role in osmotic stress adaptation when sakA is deficient. Involved in paradoxical growth, the cell wall integrity (CWI) pathway and biofilm formation. Also collaborates with mpkC to allow ful virulence in a neutropenic murine model ofinvasive pulmonary aspergillosis. MpkC and sakA have both independent and collaborative functions during the transcriptional response to transient osmotic stress and sakA not only seems to modulate pathways involved in nucleotide, fatty acid, nitrogen and organic acid biosynthesis but is also important for the activation of genes involved in mitochondrial and endoplasmic reticulum functions. This chain is Mitogen-activated protein kinase sakA, found in Aspergillus fumigatus (strain ATCC MYA-4609 / CBS 101355 / FGSC A1100 / Af293) (Neosartorya fumigata).